The primary structure comprises 122 residues: Large ribosomal subunit protein uL14 (122 aa).

The protein belongs to the universal ribosomal protein uL14 family. In terms of assembly, part of the 50S ribosomal subunit. Forms a cluster with proteins L3 and L19. In the 70S ribosome, L14 and L19 interact and together make contacts with the 16S rRNA in bridges B5 and B8.

In terms of biological role, binds to 23S rRNA. Forms part of two intersubunit bridges in the 70S ribosome. The polypeptide is Large ribosomal subunit protein uL14 (Sinorhizobium fredii (strain NBRC 101917 / NGR234)).